Here is a 192-residue protein sequence, read N- to C-terminus: UPF0149 protein YgfB (192 aa).

It belongs to the UPF0149 family.

This Salmonella agona (strain SL483) protein is UPF0149 protein YgfB.